The following is a 555-amino-acid chain: Meiotic mRNA stability protein kinase SSN3 (555 aa).

The Protein kinase domain maps to 75–463; sequence YEVIGYIAAG…AFNALEHKYF (389 aa). An ATP-binding site is contributed by 81–89; sequence IAAGTYGKV. Residues 100–138 show a composition bias toward polar residues; sequence TNSANGSSLNGTNAKIPQFDSTQPKSSSSMDMQANTNAL. A disordered region spans residues 100 to 166; the sequence is TNSANGSSLN…REDVSPHYNS (67 aa). Lys-183 contacts ATP. Catalysis depends on Asp-286, which acts as the Proton acceptor.

The protein belongs to the protein kinase superfamily. CMGC Ser/Thr protein kinase family. CDC2/CDKX subfamily. Component of the SRB8-11 complex which consists of SRB8, SSN2/SRB9, SSN3/SRB10 and SSN8/SRB11. The SRB8-11 complex associates with the Mediator complex. The SSN3/SRB10 and SSN8/SRB11 kinase-cyclin pair also associate with the RNA polymerase II holoenzyme. Interacts with TUP1.

It is found in the nucleus. The enzyme catalyses L-seryl-[protein] + ATP = O-phospho-L-seryl-[protein] + ADP + H(+). It carries out the reaction L-threonyl-[protein] + ATP = O-phospho-L-threonyl-[protein] + ADP + H(+). It catalyses the reaction [DNA-directed RNA polymerase] + ATP = phospho-[DNA-directed RNA polymerase] + ADP + H(+). Its function is as follows. Component of the SRB8-11 complex. The SRB8-11 complex is a regulatory module of the Mediator complex which is itself involved in regulation of basal and activated RNA polymerase II-dependent transcription. The SRB8-11 complex may be involved in the transcriptional repression of a subset of genes regulated by Mediator. It may inhibit the association of the Mediator complex with RNA polymerase II to form the holoenzyme complex. The SRB8-11 complex phosphorylates the C-terminal domain (CTD) of the largest subunit of RNA polymerase II RPB1 at serines 2 and 5. The SSN3/SRB10 and SSN8/SRB11 kinase-cyclin pair may also positively and negatively regulate numerous transcriptional activators in response to changes in nutritional and physiological conditions. Phosphorylates GCN4, promoting its ubiquitin-mediated degradation, and MSN2, promoting its nuclear exclusion. Phosphorylates STE12, thereby promoting its degradation and inhibition of filamentous growth. Phosphorylates GAL4, and this phosphorylation is required for efficient galactose-inducible transcription. Also phosphorylates BDF1 and the TAF2 subunit of the TFIID complex. This is Meiotic mRNA stability protein kinase SSN3 (SSN3) from Saccharomyces cerevisiae (strain ATCC 204508 / S288c) (Baker's yeast).